Here is a 104-residue protein sequence, read N- to C-terminus: L-rhamnose mutarotase (104 aa).

Residue tyrosine 18 participates in substrate binding. Histidine 22 functions as the Proton donor in the catalytic mechanism. Substrate-binding positions include tyrosine 41 and 76–77 (WW).

It belongs to the rhamnose mutarotase family. In terms of assembly, homodimer.

It localises to the cytoplasm. It catalyses the reaction alpha-L-rhamnose = beta-L-rhamnose. It participates in carbohydrate metabolism; L-rhamnose metabolism. Functionally, involved in the anomeric conversion of L-rhamnose. The sequence is that of L-rhamnose mutarotase from Acidiphilium cryptum (strain JF-5).